The following is a 715-amino-acid chain: D-ribulokinase YDR109C (715 aa).

The disordered stretch occupies residues 1–27 (MKSRKRQNNMQNETREPAVLSSQETSI).

The protein belongs to the FGGY kinase family.

It carries out the reaction D-ribulose + ATP = D-ribulose 5-phosphate + ADP + H(+). The protein operates within carbohydrate metabolism; pentose and glucuronate interconversion. Catalyzes ATP-dependent phosphorylation of D-ribulose at C-5 to form D-ribulose 5-phosphate. Postulated to function in a metabolite repair mechanism by preventing toxic accumulation of free D-ribulose formed by non-specific phosphatase activities. Alternatively, may play a role in regulating D-ribulose 5-phosphate recycling in the pentose phosphate pathway. The polypeptide is D-ribulokinase YDR109C (Saccharomyces cerevisiae (strain ATCC 204508 / S288c) (Baker's yeast)).